The primary structure comprises 521 residues: Importin subunit alpha-3 (521 aa).

An N-acetylalanine modification is found at alanine 2. Residues 2–58 form the IBB domain; sequence ADNEKLDNQRLKNFKNKGRDLETMRRQRNEVVVELRKNKRDEHLLKRRNVPHEDICE. Positions 43–52 match the Nuclear localization signal motif; sequence EHLLKRRNVP. The residue at position 60 (serine 60) is a Phosphoserine. The stretch at 66 to 106 is one ARM 1; truncated repeat; it reads YRVQNTSLEAIVQNASSDNQGIQLSAVQAARKLLSSDRNPP. ARM repeat units follow at residues 107 to 149, 150 to 194, 195 to 233, 234 to 278, 279 to 318, 319 to 360, 361 to 400, and 401 to 443; these read IDDL…TSEQ, TQAV…CRDY, VISLGVVKPLLSFISPSIPITFLRNVTWVMVNLCRHKDP, PPPM…EQIQ, MVIDSGIVPHLVPLLSHQEVKVQTAALRAVGNIVTGTDEQ, TQVV…NQQQ, VQAVIDANLVPMIIHLLDKGDFGTQKEAAWAISNLTISGR, and KDQV…KMAE. Residues 137–229 form an NLS binding site (major) region; sequence WALTNIASGT…VTWVMVNLCR (93 aa). Residues 306–394 form an NLS binding site (minor) region; it reads RAVGNIVTGT…QKEAAWAISN (89 aa). One copy of the ARM 10; atypical repeat lies at 447-485; sequence ETIGNLIEECGGLEKIEQLQNHENEDIYKLAYEIIDQFF.

It belongs to the importin alpha family. In terms of assembly, forms a complex with importin subunit beta-1 (KPNB1). Interacts with SNAI1. Interacts with TALDO1 isoform 1. Interacts with CYB1. (Microbial infection) Interacts with MERS virus protein OF4b; this interaction prevents the translocation of NF-kappa-B complex to the nucleus. As to quaternary structure, (Microbial infection) Interacts with human adenovirus 5 E1A protein; this interaction allows E1A import into the host nucleus. In terms of assembly, (Microbial infection) Interacts with Chikungunya virus capsid protein; this interaction allows the nuclear import of the viral capsid protein. As to expression, highly expressed in testis, ovary, small intestine, heart, skeletal muscle, lung and pancreas, but barely detectable in kidney, thymus, colon and peripheral blood leukocytes.

The protein localises to the cytoplasm. The protein resides in the nucleus. Its function is as follows. Functions in nuclear protein import as an adapter protein for nuclear receptor KPNB1. Binds specifically and directly to substrates containing either a simple or bipartite NLS motif. Docking of the importin/substrate complex to the nuclear pore complex (NPC) is mediated by KPNB1 through binding to nucleoporin FxFG repeats and the complex is subsequently translocated through the pore by an energy requiring, Ran-dependent mechanism. At the nucleoplasmic side of the NPC, Ran binds to importin-beta and the three components separate and importin-alpha and -beta are re-exported from the nucleus to the cytoplasm where GTP hydrolysis releases Ran from importin. The directionality of nuclear import is thought to be conferred by an asymmetric distribution of the GTP- and GDP-bound forms of Ran between the cytoplasm and nucleus. Mediates nuclear import of AARS1, MRTFA and RANBP3. In terms of biological role, (Microbial infection) In vitro, mediates the nuclear import of human cytomegalovirus UL84 by recognizing a non-classical NLS. In vitro, mediates the nuclear import of human cytomegalovirus UL84 by recognizing a non-classical NLS. The sequence is that of Importin subunit alpha-3 from Homo sapiens (Human).